Reading from the N-terminus, the 838-residue chain is pre-rRNA 2'-O-ribose RNA methyltransferase FTSJ3 (838 aa).

Gly-56, Trp-58, Asp-76, Asp-92, and Asp-117 together coordinate S-adenosyl-L-methionine. Catalysis depends on Lys-157, which acts as the Proton acceptor. The disordered stretch occupies residues Ile-332–Asn-367. A phosphoserine mark is found at Ser-333, Ser-335, and Ser-336. The span at Ser-336–Val-348 shows a compositional bias: acidic residues. Residue Arg-390 is modified to Citrulline. The segment at Ile-453–Ser-482 is disordered. A compositionally biased stretch (acidic residues) spans Asp-457–Glu-474. Residues Ser-532 and Ser-545 each carry the phosphoserine modification. Residues Asp-537 to Gly-639 are disordered. Residue Lys-571 forms a Glycyl lysine isopeptide (Lys-Gly) (interchain with G-Cter in SUMO2) linkage. Ser-576 carries the post-translational modification Phosphoserine. Residues Lys-634 and Lys-650 each participate in a glycyl lysine isopeptide (Lys-Gly) (interchain with G-Cter in SUMO2) cross-link. Ser-667 is modified (phosphoserine). Lys-669 participates in a covalent cross-link: Glycyl lysine isopeptide (Lys-Gly) (interchain with G-Cter in SUMO2). At Ser-679 the chain carries Phosphoserine. Lys-701 is covalently cross-linked (Glycyl lysine isopeptide (Lys-Gly) (interchain with G-Cter in SUMO2)). A coiled-coil region spans residues Ile-730 to Glu-768. Arg-774 is modified (citrulline). Basic residues predominate over residues Val-802 to Phe-812. The disordered stretch occupies residues Val-802–Lys-838. Over residues Lys-813–Lys-829 the composition is skewed to basic and acidic residues.

This sequence belongs to the class I-like SAM-binding methyltransferase superfamily. RNA methyltransferase RlmE family. SPB1 subfamily. As to quaternary structure, interacts with NIP7. Post-translationally, citrullinated by PADI4.

It is found in the nucleus. The protein resides in the nucleolus. The catalysed reaction is a ribonucleotide in rRNA + S-adenosyl-L-methionine = a 2'-O-methylribonucleotide in rRNA + S-adenosyl-L-homocysteine + H(+). Its function is as follows. RNA 2'-O-methyltransferase involved in the processing of the 34S pre-rRNA to 18S rRNA and in 40S ribosomal subunit formation. This is pre-rRNA 2'-O-ribose RNA methyltransferase FTSJ3 (Ftsj3) from Mus musculus (Mouse).